The sequence spans 95 residues: Protein TusB (95 aa).

Belongs to the DsrH/TusB family. As to quaternary structure, heterohexamer, formed by a dimer of trimers. The hexameric TusBCD complex contains 2 copies each of TusB, TusC and TusD. The TusBCD complex interacts with TusE.

Its subcellular location is the cytoplasm. Its function is as follows. Part of a sulfur-relay system required for 2-thiolation of 5-methylaminomethyl-2-thiouridine (mnm(5)s(2)U) at tRNA wobble positions. The chain is Protein TusB from Escherichia coli O139:H28 (strain E24377A / ETEC).